The sequence spans 457 residues: Transcription factor PCF7 (457 aa).

Residues 58–84 (STLHYLLQEKERAQQAHEQLQIYQQQQ) are a coiled coil. Residues 95–119 (RQPASRGPGGGGGGGDGGGSSGEST) form a disordered region. Residues 101-115 (GPGGGGGGGDGGGSS) show a composition bias toward gly residues. The 59-residue stretch at 140-198 (RKDRHSKVCTARGLRDRRVRLAAHTAIRFYDVQDRLGYDRPSKAVDWLMRNAKAAIDEL) folds into the TCP domain. Disordered regions lie at residues 199 to 231 (PDRAEAPPPPAAASTEQPEATEQATSTSYGFGN) and 263 to 299 (KSLFPSSSTASGAASAGHDEYRGSPPDLLSRTTSNQQ). Composition is skewed to low complexity over residues 210-225 (AASTEQPEATEQATST) and 268-278 (SSSTASGAASA).

As to quaternary structure, forms homodimers and heterodimers.

It is found in the nucleus. Transcription activator. Binds the promoter core sequence 5'-GGNCC-3'. This Oryza sativa subsp. japonica (Rice) protein is Transcription factor PCF7 (PCF7).